We begin with the raw amino-acid sequence, 429 residues long: MSTALLDAVVKKNRVRLIPFMLALYVLAFLDRSNIGFAKQTYQIDTGLSNEAYALGAGIFFVVYAFLGVPANLLMRKLGARTWIGTTTLLWGFLSAAMAWADTEAKFLIVRTLLRAAEAGFFPGMIYLTSQWFPQRNRASIMGLFYMGAPLALTLGSPLSGALLEMHGFMGHPGWFWMFVIEGLLAVGAGVFTFFWLDDTPEQARFLSKQEKTLLINQLASEEQQKVTSRLSDALRNGRVWQLAIIYLTIQVAVYGLIFFLPTQVAALLGTKVGFTASVVTAIPWVAALFGTWLIPRYSDKTGERRNVAALTLLAAGIGIGLSGLLSPVMAIVALCVAAIGFIAVQPVFWTMPTQLLSGTALAAGIGFVNLFGAVGGFIAPILRVKAETLFASDAAGLLTLAAVAVIGSLIIFTLRVNRTVAQTDVAHH.

At 1–16 the chain is on the cytoplasmic side; sequence MSTALLDAVVKKNRVR. Residues 17-37 form a helical membrane-spanning segment; the sequence is LIPFMLALYVLAFLDRSNIGF. At 38-54 the chain is on the periplasmic side; it reads AKQTYQIDTGLSNEAYA. A helical membrane pass occupies residues 55–75; that stretch reads LGAGIFFVVYAFLGVPANLLM. At 76–81 the chain is on the cytoplasmic side; sequence RKLGAR. A helical membrane pass occupies residues 82–102; sequence TWIGTTTLLWGFLSAAMAWAD. Residues 103 to 143 are Periplasmic-facing; the sequence is TEAKFLIVRTLLRAAEAGFFPGMIYLTSQWFPQRNRASIMG. A helical membrane pass occupies residues 144–164; it reads LFYMGAPLALTLGSPLSGALL. The Cytoplasmic segment spans residues 165–174; it reads EMHGFMGHPG. Residues 175 to 195 traverse the membrane as a helical segment; sequence WFWMFVIEGLLAVGAGVFTFF. The Periplasmic portion of the chain corresponds to 196–242; the sequence is WLDDTPEQARFLSKQEKTLLINQLASEEQQKVTSRLSDALRNGRVWQ. A helical membrane pass occupies residues 243–263; the sequence is LAIIYLTIQVAVYGLIFFLPT. Residues 264 to 274 lie on the Cytoplasmic side of the membrane; it reads QVAALLGTKVG. A helical transmembrane segment spans residues 275–295; sequence FTASVVTAIPWVAALFGTWLI. The Periplasmic segment spans residues 296–324; it reads PRYSDKTGERRNVAALTLLAAGIGIGLSG. The chain crosses the membrane as a helical span at residues 325-345; the sequence is LLSPVMAIVALCVAAIGFIAV. Over 346-361 the chain is Cytoplasmic; sequence QPVFWTMPTQLLSGTA. A helical transmembrane segment spans residues 362-382; sequence LAAGIGFVNLFGAVGGFIAPI. Topologically, residues 383–394 are periplasmic; that stretch reads LRVKAETLFASD. Residues 395–415 traverse the membrane as a helical segment; the sequence is AAGLLTLAAVAVIGSLIIFTL. Topologically, residues 416–429 are cytoplasmic; that stretch reads RVNRTVAQTDVAHH.

It belongs to the major facilitator superfamily. Phthalate permease family.

It is found in the cell inner membrane. The chain is Inner membrane transport protein RhmT (rhmT) from Escherichia coli (strain K12).